The primary structure comprises 75 residues: Phytosulfokines 3 (75 aa).

A signal peptide spans 1 to 22 (MSPKVIAICLVALLLPISISHG). Residues 23 to 66 (GRIGPIEPSKASSKVVERGNYDGRVEGCEEDDCLVERLLVAHLD) constitute a propeptide that is removed on maturation. Residues Tyr-67 and Tyr-69 each carry the sulfotyrosine modification. A propeptide spanning residues 72–75 (GKHN) is cleaved from the precursor.

It belongs to the phytosulfokine family. In terms of processing, sulfation is important for activity and for the binding to a putative membrane receptor. PSK-alpha is produced by endopeptidase digestion. PSK-beta is produced from PSK-alpha by exopeptidase digestion.

Its subcellular location is the secreted. Its function is as follows. Promotes plant cell differentiation, organogenesis and somatic embryogenesis as well as cell proliferation. This is Phytosulfokines 3 (PSK3) from Oryza sativa subsp. japonica (Rice).